We begin with the raw amino-acid sequence, 206 residues long: ATP phosphoribosyltransferase (206 aa).

Belongs to the ATP phosphoribosyltransferase family. Short subfamily. As to quaternary structure, heteromultimer composed of HisG and HisZ subunits.

It is found in the cytoplasm. It catalyses the reaction 1-(5-phospho-beta-D-ribosyl)-ATP + diphosphate = 5-phospho-alpha-D-ribose 1-diphosphate + ATP. Its pathway is amino-acid biosynthesis; L-histidine biosynthesis; L-histidine from 5-phospho-alpha-D-ribose 1-diphosphate: step 1/9. Functionally, catalyzes the condensation of ATP and 5-phosphoribose 1-diphosphate to form N'-(5'-phosphoribosyl)-ATP (PR-ATP). Has a crucial role in the pathway because the rate of histidine biosynthesis seems to be controlled primarily by regulation of HisG enzymatic activity. This is ATP phosphoribosyltransferase from Campylobacter curvus (strain 525.92).